The sequence spans 83 residues: MVVCLIGGVAGSLWPRPAGRLRGGCYFAFMGVAWVLLAISAIANAVKGSLWWDIWSLGLLVLIPAVVYGKMRRSRRISSDQDR.

The next 2 helical transmembrane spans lie at Gly23–Ala43 and Ser49–Gly69.

It is found in the cell membrane. This is an uncharacterized protein from Mycobacterium tuberculosis (strain CDC 1551 / Oshkosh).